Here is a 251-residue protein sequence, read N- to C-terminus: Transcription initiation factor TFIID subunit 9B (251 aa).

Met-1 carries the post-translational modification N-acetylmethionine. Phosphoserine is present on Ser-147. Phosphothreonine occurs at positions 159 and 174. Ser-177 bears the Phosphoserine mark. The interval 229-251 is disordered; it reads QNTANEANPLKRKHEDDDDNDIM.

This sequence belongs to the TAF9 family. As to quaternary structure, binds TAF5 and TAF6. Component of TFIID and the TATA-binding protein-free TAF complex (TFTC). TFIID is composed of TATA binding protein (TBP) and a number of TBP-associated factors (TAFs). Binds N-terminal domain of p53/TP53 which is essential for transcription.

The protein localises to the nucleus. In terms of biological role, essential for cell viability. TAF9 and TAF9B are involved in transcriptional activation as well as repression of distinct but overlapping sets of genes. May have a role in gene regulation associated with apoptosis. TAFs are components of the transcription factor IID (TFIID) complex, the TBP-free TAFII complex (TFTC), the PCAF histone acetylase complex and the STAGA transcription coactivator-HAT complex. TFIID or TFTC are essential for the regulation of RNA polymerase II-mediated transcription. This chain is Transcription initiation factor TFIID subunit 9B (TAF9B), found in Homo sapiens (Human).